We begin with the raw amino-acid sequence, 205 residues long: Small ribosomal subunit protein uS4 (205 aa).

The S4 RNA-binding domain occupies 94-157 (SRLDTVVYRM…QQIPLIQESI (64 aa)).

Belongs to the universal ribosomal protein uS4 family. In terms of assembly, part of the 30S ribosomal subunit. Contacts protein S5. The interaction surface between S4 and S5 is involved in control of translational fidelity.

In terms of biological role, one of the primary rRNA binding proteins, it binds directly to 16S rRNA where it nucleates assembly of the body of the 30S subunit. With S5 and S12 plays an important role in translational accuracy. In Rickettsia prowazekii (strain Madrid E), this protein is Small ribosomal subunit protein uS4.